The sequence spans 430 residues: Synaptotagmin-11 (430 aa).

At 1–15 (MAEITNIRPSFDVSP) the chain is on the vesicular side. The helical transmembrane segment at 16–36 (VAAGLIGASVLVVCVSVTVFV) threads the bilayer. Residues 37-430 (WTCCHQQAEK…IAKWHSLSEY (394 aa)) are Cytoplasmic-facing. Basic and acidic residues predominate over residues 79–90 (RRDKDGPRRESG). Disordered stretches follow at residues 79–120 (RRDK…CMDQ) and 132–152 (RSPM…SSPE). A Phosphoserine modification is found at S133. A compositionally biased stretch (polar residues) spans 134 to 150 (PMTSLTPGESKATSPSS). C2 domains follow at residues 156–278 (MLGS…QLTR) and 290–425 (SRGE…AKWH). Residues D249, S252, and D255 each coordinate Ca(2+).

The protein belongs to the synaptotagmin family. Homodimer. Can also form heterodimers. Interacts with PRKN. Interacts (via C2 2 domain) with AGO2 and SND1; the interaction with SND1 is direct. Interacts with KIF1A; the interaction increases in presence of calcium. Ca(2+) is required as a cofactor. In terms of processing, ubiquitinated, at least by PRKN, and targeted to the proteasome complex for degradation. Ubiquitination is inhibited by ATP13A2. Expressed in cerebellun, cerebellar cortex, hippocampus, olfactory bulb and spinal cord (at protein level). Expressed by neurons, astrocytes and microglia (at protein level). Expressed in macrophages (at protein level).

The protein resides in the cytoplasmic vesicle membrane. It is found in the perikaryon. The protein localises to the golgi apparatus. Its subcellular location is the trans-Golgi network membrane. It localises to the recycling endosome membrane. The protein resides in the lysosome membrane. It is found in the cytoplasmic vesicle. The protein localises to the phagosome. Its subcellular location is the cell projection. It localises to the axon. The protein resides in the dendrite. It is found in the postsynaptic density. The protein localises to the clathrin-coated vesicle membrane. In terms of biological role, synaptotagmin family member involved in vesicular and membrane trafficking which does not bind Ca(2+). Inhibits clathrin-mediated and bulk endocytosis, functions to ensure precision in vesicle retrieval. Plays an important role in dopamine transmission by regulating endocytosis and the vesicle-recycling process. Essential component of a neuronal vesicular trafficking pathway that differs from the synaptic vesicle trafficking pathway but is crucial for development and synaptic plasticity. In macrophages and microglia, inhibits the conventional cytokine secretion, of at least IL6 and TNF, and phagocytosis. In astrocytes, regulates lysosome exocytosis, mechanism required for the repair of injured astrocyte cell membrane. Required for the ATP13A2-mediated regulation of the autophagy-lysosome pathway. The protein is Synaptotagmin-11 of Mus musculus (Mouse).